We begin with the raw amino-acid sequence, 686 residues long: MAKVNLIESPYSLLQLKGIGPKKIEVLQQLNIHTVEDLVLYLPTRYEDNTVIDLNQAEDQSNVTIEGQVYTAPVVAFFGRNKSKLTVHLMVNNIAVKCIFFNQPYLKKKIELNQTITVKGKWNRVKQEITGNRVFFNSQGTQTQENADVQLEPVYRIKEGIKQKQIRDQIRQALNDVTIHEWLTDELREKYKLETLDFTLNTLHHPKSKEDLLRARRTYAFTELFLFELRMQWLNRLEKSSDEAIEIDYDIDQVKSFIDRLPFELTEAQKSSVNEIFRDLKAPIRMHRLLQGDVGSGKTVVAAICMYALKTAGYQSALMVPTEILAEQHAESLMALFGDSMNVALLTGSVKGKKRKILLEQLENGTIDCLIGTHALIQDDVIFHNVGLVITDEQHRFGVNQRQLLREKGAMTNVLFMTATPIPRTLAISVFGEMDVSSIKQLPKGRKPIITTWAKHEQYDKVLMQMTSELKKGRQAYVICPLIESSEHLEDVQNVVALYESLQQYYGVSRVGLLHGKLSADEKDEVMQKFSNHEINVLVSTTVVEVGVNVPNATFMMIYDADRFGLSTLHQLRGRVGRSDQQSYCVLIASPKTETGIERMTIMTQTTDGFELSERDLEMRGPGDFFGVKQSGLPDFLVANLVEDYRMLEVARDEAAELIQSGVFFENTYQHLRHFVEENLLHRSFD.

Residues 50 to 149 form a wedge domain region; that stretch reads TVIDLNQAED…GTQTQENADV (100 aa). The Helicase ATP-binding domain maps to 279 to 439; sequence DLKAPIRMHR…VFGEMDVSSI (161 aa). Residue 292-299 participates in ATP binding; the sequence is GDVGSGKT. A DEAH box motif is present at residues 392–395; sequence DEQH. One can recognise a Helicase C-terminal domain in the interval 462–618; the sequence is VLMQMTSELK…GFELSERDLE (157 aa).

Belongs to the helicase family. RecG subfamily. Monomer.

The enzyme catalyses Couples ATP hydrolysis with the unwinding of duplex DNA by translocating in the 3'-5' direction.. The catalysed reaction is ATP + H2O = ADP + phosphate + H(+). In terms of biological role, plays a critical role in recombination and DNA repair. Helps process Holliday junction intermediates to mature products by catalyzing branch migration. Has replication fork regression activity, unwinds stalled or blocked replication forks to make a HJ that can be resolved. Has a DNA unwinding activity characteristic of a DNA helicase with 3'-5' polarity. The polypeptide is ATP-dependent DNA helicase RecG (Staphylococcus aureus (strain NCTC 8325 / PS 47)).